Consider the following 389-residue polypeptide: Methylthioribose-1-phosphate isomerase (389 aa).

The active-site Proton donor is the Asp-258.

Belongs to the eIF-2B alpha/beta/delta subunits family. MtnA subfamily.

Its subcellular location is the cytoplasm. It localises to the nucleus. It carries out the reaction 5-(methylsulfanyl)-alpha-D-ribose 1-phosphate = 5-(methylsulfanyl)-D-ribulose 1-phosphate. It participates in amino-acid biosynthesis; L-methionine biosynthesis via salvage pathway; L-methionine from S-methyl-5-thio-alpha-D-ribose 1-phosphate: step 1/6. Catalyzes the interconversion of methylthioribose-1-phosphate (MTR-1-P) into methylthioribulose-1-phosphate (MTRu-1-P). This is Methylthioribose-1-phosphate isomerase from Chaetomium globosum (strain ATCC 6205 / CBS 148.51 / DSM 1962 / NBRC 6347 / NRRL 1970) (Soil fungus).